The chain runs to 912 residues: Protein translocase subunit SecA (912 aa).

Residues glutamine 87, 105–109 (GEGKT), and aspartate 509 contribute to the ATP site. Over residues 847-859 (RERAVSQPVHEDA) the composition is skewed to basic and acidic residues. A disordered region spans residues 847-912 (RERAVSQPVH…KYKHCHGKLN (66 aa)). Over residues 867 to 878 (AESEEASGESAD) the composition is skewed to acidic residues. Over residues 881 to 892 (QPVRRDGPKVGR) the composition is skewed to basic and acidic residues. Zn(2+) contacts are provided by cysteine 896, cysteine 898, cysteine 907, and histidine 908. The segment covering 902-912 (KKYKHCHGKLN) has biased composition (basic residues).

Belongs to the SecA family. In terms of assembly, monomer and homodimer. Part of the essential Sec protein translocation apparatus which comprises SecA, SecYEG and auxiliary proteins SecDF-YajC and YidC. Zn(2+) is required as a cofactor.

The protein resides in the cell inner membrane. It is found in the cytoplasm. The catalysed reaction is ATP + H2O + cellular proteinSide 1 = ADP + phosphate + cellular proteinSide 2.. In terms of biological role, part of the Sec protein translocase complex. Interacts with the SecYEG preprotein conducting channel. Has a central role in coupling the hydrolysis of ATP to the transfer of proteins into and across the cell membrane, serving both as a receptor for the preprotein-SecB complex and as an ATP-driven molecular motor driving the stepwise translocation of polypeptide chains across the membrane. The chain is Protein translocase subunit SecA from Chromohalobacter salexigens (strain ATCC BAA-138 / DSM 3043 / CIP 106854 / NCIMB 13768 / 1H11).